An 846-amino-acid polypeptide reads, in one-letter code: Inactive cap-specific mRNA (nucleoside-2'-O-)-methyltransferase 1B (846 aa).

The interval 30-50 (DDEDDFVDDPSPTEQKTKAEK) is disordered. Residues 44–90 (QKTKAEKKMERMGYKAGEGLGKNKQGIQEPIAISFREGKAGLGHEQW) form the G-patch domain. The RrmJ-type SAM-dependent 2'-O-MTase domain occupies 184 to 413 (FFLNRSAMKT…ERFVVCKGLR (230 aa)).

The chain is Inactive cap-specific mRNA (nucleoside-2'-O-)-methyltransferase 1B from Caenorhabditis briggsae.